Here is a 241-residue protein sequence, read N- to C-terminus: DNA repair protein RecO (241 aa).

This sequence belongs to the RecO family.

Its function is as follows. Involved in DNA repair and RecF pathway recombination. This chain is DNA repair protein RecO, found in Orientia tsutsugamushi (strain Ikeda) (Rickettsia tsutsugamushi).